The chain runs to 531 residues: SWI/SNF-related matrix-associated actin-dependent regulator of chromatin subfamily D member 2 (531 aa).

2 positions are modified to asymmetric dimethylarginine: Arg81 and Arg104. Ser203 bears the Phosphoserine mark. The tract at residues 205-226 is disordered; it reads SKAEGDSAGTAGTPGGTPAGDK. Thr217 bears the Phosphothreonine mark. Lys226 participates in a covalent cross-link: Glycyl lysine isopeptide (Lys-Gly) (interchain with G-Cter in SUMO2). Residues 306–383 enclose the SWIB/MDM2 domain; that stretch reads HQPPQYKLDP…PMKLAGLLQH (78 aa).

It belongs to the SMARCD family. Component of the multiprotein chromatin-remodeling complexes SWI/SNF: SWI/SNF-A (BAF), SWI/SNF-B (PBAF) and related complexes. The canonical complex contains a catalytic subunit (either SMARCA4/BRG1/BAF190A or SMARCA2/BRM/BAF190B), and at least SMARCE1, ACTL6A/BAF53, SMARCC1/BAF155, SMARCC2/BAF170, and SMARCB1/SNF5/BAF47. Other subunits specific to each of the complexes may also be present permitting several possible combinations developmentally and tissue specific. Component of the BAF complex, which includes at least actin (ACTB), ARID1A/BAF250A, ARID1B/BAF250B, SMARCA2/BRM, SMARCA4/BRG1, ACTL6A/BAF53, ACTL6B/BAF53B, SMARCE1/BAF57, SMARCC1/BAF155, SMARCC2/BAF170, SMARCB1/SNF5/INI1, and one or more SMARCD1/BAF60A, SMARCD2/BAF60B, or SMARCD3/BAF60C. In muscle cells, the BAF complex also contains DPF3. Component of the SWI/SNF-B (PBAF) chromatin remodeling complex, at least composed of SMARCA4/BRG1, SMARCB1/BAF47/SNF5, ACTL6A/BAF53A or ACTL6B/BAF53B, SMARCE1/BAF57, SMARCD1/BAF60A, SMARCD2/BAF60B, perhaps SMARCD3/BAF60C, SMARCC1/BAF155, SMARCC2/BAF170, PBRM1/BAF180, ARID2/BAF200 and actin (ACTB). Interacts with UNKL. Interacts with CEBPE. Post-translationally, ubiquitinated through a signaling process involving RAC1 and the RING finger protein UNKL. As to expression, isoform 2 is expressed in the pancreas.

It is found in the nucleus. In terms of biological role, involved in transcriptional activation and repression of select genes by chromatin remodeling (alteration of DNA-nucleosome topology). Component of SWI/SNF chromatin remodeling complexes that carry out key enzymatic activities, changing chromatin structure by altering DNA-histone contacts within a nucleosome in an ATP-dependent manner. Critical regulator of myeloid differentiation, controlling granulocytopoiesis and the expression of genes involved in neutrophil granule formation. The polypeptide is SWI/SNF-related matrix-associated actin-dependent regulator of chromatin subfamily D member 2 (SMARCD2) (Homo sapiens (Human)).